The following is a 1138-amino-acid chain: 2'-5'-oligoadenylate synthase 3 (1138 aa).

Position 1 is an N-acetylmethionine (methionine 1). The interval 6 to 341 (TPAGALDKLV…GVLVQPWEGP (336 aa)) is OAS domain 1. 2 interaction with dsRNA regions span residues 12–56 (DKLV…VIRI) and 185–199 (EPRK…AKLK). The interval 342–462 (GLPRAGILDL…GSRMSPDLSQ (121 aa)) is linker. The span at 370–379 (LAVQSKERSQ) shows a compositional bias: basic and acidic residues. Disordered stretches follow at residues 370-403 (LAVQ…NPSA) and 434-459 (TQST…MSPD). Residues 447–459 (SSISTAGSRMSPD) show a composition bias toward polar residues. OAS domain stretches follow at residues 463–793 (IPSK…PWDV) and 801–1135 (TLAE…WPVK). ATP is bound at residue serine 855. Mg(2+) contacts are provided by aspartate 867, aspartate 869, and aspartate 939. The ATP site is built by arginine 998, lysine 1001, and glutamine 1020.

The protein belongs to the 2-5A synthase family. In terms of assembly, monomer. Mg(2+) is required as a cofactor. As to expression, intestine.

It is found in the cytoplasm. The protein localises to the nucleus. It carries out the reaction 3 ATP = 5'-triphosphoadenylyl-(2'-&gt;5')-adenylyl-(2'-&gt;5')-adenosine + 2 diphosphate. Its activity is regulated as follows. Produced as a latent enzyme which is activated by dsRNA generated during the course of viral infection. Strongly activated by long dsRNAs at least 50 nucleotides in length. ssRNA does not activate the enzyme. Interferon-induced, dsRNA-activated antiviral enzyme which plays a critical role in cellular innate antiviral response. In addition, it may also play a role in other cellular processes such as apoptosis, cell growth, differentiation and gene regulation. Synthesizes preferentially dimers of 2'-5'-oligoadenylates (2-5A) from ATP which then bind to the inactive monomeric form of ribonuclease L (RNase L) leading to its dimerization and subsequent activation. Activation of RNase L leads to degradation of cellular as well as viral RNA, resulting in the inhibition of protein synthesis, thus terminating viral replication. Can mediate the antiviral effect via the classical RNase L-dependent pathway or an alternative antiviral pathway independent of RNase L. This Mus musculus (Mouse) protein is 2'-5'-oligoadenylate synthase 3 (Oas3).